The chain runs to 237 residues: Fibroblast growth factor 3 (237 aa).

The first 21 residues, 1–21 (MVIIWILLLSFISCGPQVSWA), serve as a signal peptide directing secretion. An N-linked (GlcNAc...) asparagine glycan is attached at Asn83.

Belongs to the heparin-binding growth factors family.

In terms of biological role, plays an important role in the regulation of embryonic development, cell proliferation, and cell differentiation. The polypeptide is Fibroblast growth factor 3 (fgf3) (Xenopus laevis (African clawed frog)).